The primary structure comprises 393 residues: UDP-glucose 6-dehydrogenase (393 aa).

NAD(+)-binding residues include Val11, Asp31, Lys36, Thr85, Thr120, and Glu147. Substrate-binding positions include 143–147, Lys199, Asn203, 244–248, and Gly252; these read EFLRE and YNNPS. Residue Tyr254 participates in NAD(+) binding. Cys255 functions as the Nucleophile in the catalytic mechanism. Lys258 is an NAD(+) binding site. Position 309 (Lys309) interacts with substrate. Arg316 is an NAD(+) binding site.

It belongs to the UDP-glucose/GDP-mannose dehydrogenase family. Homodimer.

The enzyme catalyses UDP-alpha-D-glucose + 2 NAD(+) + H2O = UDP-alpha-D-glucuronate + 2 NADH + 3 H(+). It participates in nucleotide-sugar biosynthesis; UDP-alpha-D-glucuronate biosynthesis; UDP-alpha-D-glucuronate from UDP-alpha-D-glucose: step 1/1. It functions in the pathway capsule biogenesis; capsule polysaccharide biosynthesis. In terms of biological role, catalyzes the formation of UDP-glucuronic acid which is required for capsular polysaccharide synthesis. Does not catalyze the formation of glucuronamide moiety of the capsular polysaccharide. This is UDP-glucose 6-dehydrogenase from Campylobacter jejuni subsp. jejuni serotype O:2 (strain ATCC 700819 / NCTC 11168).